The following is a 181-amino-acid chain: Alkyl hydroperoxide reductase AhpD (181 aa).

Cys130 (proton donor) is an active-site residue. A disulfide bond links Cys130 and Cys133. The Cysteine sulfenic acid (-SOH) intermediate role is filled by Cys133.

Belongs to the AhpD family.

It carries out the reaction N(6)-[(R)-dihydrolipoyl]-L-lysyl-[lipoyl-carrier protein] + a hydroperoxide = N(6)-[(R)-lipoyl]-L-lysyl-[lipoyl-carrier protein] + an alcohol + H2O. Antioxidant protein with alkyl hydroperoxidase activity. Required for the reduction of the AhpC active site cysteine residues and for the regeneration of the AhpC enzyme activity. In Gluconacetobacter diazotrophicus (strain ATCC 49037 / DSM 5601 / CCUG 37298 / CIP 103539 / LMG 7603 / PAl5), this protein is Alkyl hydroperoxide reductase AhpD.